The sequence spans 844 residues: DNA mismatch repair protein MutS (844 aa).

610–617 (GPNMGGKS) serves as a coordination point for ATP.

Belongs to the DNA mismatch repair MutS family.

In terms of biological role, this protein is involved in the repair of mismatches in DNA. It is possible that it carries out the mismatch recognition step. This protein has a weak ATPase activity. The chain is DNA mismatch repair protein MutS from Francisella tularensis subsp. tularensis (strain WY96-3418).